We begin with the raw amino-acid sequence, 439 residues long: Ribosomal protein uS12 methylthiotransferase RimO (439 aa).

The 113-residue stretch at 7-119 (KQLCLISLGC…IDIMIAKKQN (113 aa)) folds into the MTTase N-terminal domain. Residues cysteine 16, cysteine 50, cysteine 82, cysteine 151, cysteine 155, and cysteine 158 each contribute to the [4Fe-4S] cluster site. One can recognise a Radical SAM core domain in the interval 137 to 365 (TGSSVHAYVK…NKIALKHQNN (229 aa)).

It belongs to the methylthiotransferase family. RimO subfamily. The cofactor is [4Fe-4S] cluster.

Its subcellular location is the cytoplasm. The enzyme catalyses L-aspartate(89)-[ribosomal protein uS12]-hydrogen + (sulfur carrier)-SH + AH2 + 2 S-adenosyl-L-methionine = 3-methylsulfanyl-L-aspartate(89)-[ribosomal protein uS12]-hydrogen + (sulfur carrier)-H + 5'-deoxyadenosine + L-methionine + A + S-adenosyl-L-homocysteine + 2 H(+). Its function is as follows. Catalyzes the methylthiolation of an aspartic acid residue of ribosomal protein uS12. In Helicobacter pylori (strain Shi470), this protein is Ribosomal protein uS12 methylthiotransferase RimO.